A 310-amino-acid chain; its full sequence is tRNA dimethylallyltransferase (310 aa).

Residue 12–19 (GPTATGKT) participates in ATP binding. 14–19 (TATGKT) contacts substrate. The tract at residues 37–40 (DSMM) is interaction with substrate tRNA.

This sequence belongs to the IPP transferase family. Monomer. The cofactor is Mg(2+).

The catalysed reaction is adenosine(37) in tRNA + dimethylallyl diphosphate = N(6)-dimethylallyladenosine(37) in tRNA + diphosphate. In terms of biological role, catalyzes the transfer of a dimethylallyl group onto the adenine at position 37 in tRNAs that read codons beginning with uridine, leading to the formation of N6-(dimethylallyl)adenosine (i(6)A). The protein is tRNA dimethylallyltransferase of Desulforudis audaxviator (strain MP104C).